A 232-amino-acid polypeptide reads, in one-letter code: Phosphatidylserine decarboxylase proenzyme (232 aa).

The Schiff-base intermediate with substrate; via pyruvic acid role is filled by serine 190. Serine 190 carries the post-translational modification Pyruvic acid (Ser); by autocatalysis.

This sequence belongs to the phosphatidylserine decarboxylase family. PSD-A subfamily. In terms of assembly, heterodimer of a large membrane-associated beta subunit and a small pyruvoyl-containing alpha subunit. It depends on pyruvate as a cofactor. Is synthesized initially as an inactive proenzyme. Formation of the active enzyme involves a self-maturation process in which the active site pyruvoyl group is generated from an internal serine residue via an autocatalytic post-translational modification. Two non-identical subunits are generated from the proenzyme in this reaction, and the pyruvate is formed at the N-terminus of the alpha chain, which is derived from the carboxyl end of the proenzyme. The post-translation cleavage follows an unusual pathway, termed non-hydrolytic serinolysis, in which the side chain hydroxyl group of the serine supplies its oxygen atom to form the C-terminus of the beta chain, while the remainder of the serine residue undergoes an oxidative deamination to produce ammonia and the pyruvoyl prosthetic group on the alpha chain.

The protein localises to the cell membrane. It carries out the reaction a 1,2-diacyl-sn-glycero-3-phospho-L-serine + H(+) = a 1,2-diacyl-sn-glycero-3-phosphoethanolamine + CO2. The protein operates within phospholipid metabolism; phosphatidylethanolamine biosynthesis; phosphatidylethanolamine from CDP-diacylglycerol: step 2/2. Its function is as follows. Catalyzes the formation of phosphatidylethanolamine (PtdEtn) from phosphatidylserine (PtdSer). The sequence is that of Phosphatidylserine decarboxylase proenzyme from Bartonella bacilliformis (strain ATCC 35685 / KC583 / Herrer 020/F12,63).